The primary structure comprises 405 residues: Tryptophan synthase beta chain (405 aa).

K86 carries the post-translational modification N6-(pyridoxal phosphate)lysine.

It belongs to the TrpB family. As to quaternary structure, tetramer of two alpha and two beta chains. The cofactor is pyridoxal 5'-phosphate.

It carries out the reaction (1S,2R)-1-C-(indol-3-yl)glycerol 3-phosphate + L-serine = D-glyceraldehyde 3-phosphate + L-tryptophan + H2O. It functions in the pathway amino-acid biosynthesis; L-tryptophan biosynthesis; L-tryptophan from chorismate: step 5/5. In terms of biological role, the beta subunit is responsible for the synthesis of L-tryptophan from indole and L-serine. This Shewanella piezotolerans (strain WP3 / JCM 13877) protein is Tryptophan synthase beta chain.